The sequence spans 194 residues: Imidazoleglycerol-phosphate dehydratase (194 aa).

Belongs to the imidazoleglycerol-phosphate dehydratase family.

The protein localises to the cytoplasm. It catalyses the reaction D-erythro-1-(imidazol-4-yl)glycerol 3-phosphate = 3-(imidazol-4-yl)-2-oxopropyl phosphate + H2O. It functions in the pathway amino-acid biosynthesis; L-histidine biosynthesis; L-histidine from 5-phospho-alpha-D-ribose 1-diphosphate: step 6/9. The sequence is that of Imidazoleglycerol-phosphate dehydratase from Bacillus cereus (strain AH820).